An 835-amino-acid chain; its full sequence is Protein bicaudal D homolog 1 (835 aa).

Residues 1–264 (MAAEEALKTV…YINLSDSHIS (264 aa)) are a coiled coil. Positions 278–297 (EPNNDDKMNGHIHGPLGKLN) are disordered. A coiled-coil region spans residues 320–519 (ELNISEIQKL…TFSEELAQLY (200 aa)). 2 disordered regions span residues 545–616 (RSGS…LDTS) and 800–835 (DHEQ…SAHN). The segment covering 557–572 (GLLSPRLSRRGVSSPV) has biased composition (low complexity). Over residues 581–590 (VSKENTETSK) the composition is skewed to basic and acidic residues. The span at 591 to 604 (EPSPTKTPTISPVI) shows a compositional bias: low complexity. A coiled-coil region spans residues 663–803 (IDKDKEALME…LEDLEFDHEQ (141 aa)). Positions 663-803 (IDKDKEALME…LEDLEFDHEQ (141 aa)) are interaction with RAB6A.

The protein belongs to the BicD family. Interacts with RAB6A. Interacts (via C-terminus) with RAB6B (GTP-bound); the interaction is direct. Interacts with CLIP-115 and KIFC2. As to expression, expressed in the brain, heart and skeletal muscle.

The protein localises to the golgi apparatus. Functionally, regulates coat complex coatomer protein I (COPI)-independent Golgi-endoplasmic reticulum transport by recruiting the dynein-dynactin motor complex. The protein is Protein bicaudal D homolog 1 (Bicd1) of Mus musculus (Mouse).